The sequence spans 329 residues: MATGQKLMRAVRVFEFGGPEVLKLRSDIAVPIPKDHQVLIKVHACGVNPVETYIRSGTYSRKPLLPYTPGSDVAGVIEAVGDNASAFKKGDRVFTSSTISGGYAEYALAADHTVYKLPEKLDFKQGAAIGIPYFTAYRALIHSACVKAGESVLVHGASGGVGLAACQIARAYGLKILGTAGTEEGQKIVLQNGAHEVFNHREVNYIDKIKKYVGEKGIDIIIEMLANVNLSKDLSLLSHGGRVIVVGSRGTIEINPRDTMAKESSIIGVTLFSSTKEEFQQYAAALQAGMEIGWLKPVIGSQYPLEKVAEAHENIIHGSGATGKMILLL.

Position 2 is an N-acetylalanine (alanine 2). An N6-acetyllysine modification is found at lysine 23. NADP(+)-binding positions include tyrosine 53, 158-161, glycine 181, histidine 200, asparagine 229, 246-249, and 269-271; these read SGGV, VGSR, and VTL. A Phosphoserine modification is found at serine 248. An N6-succinyllysine modification is found at lysine 296.

It belongs to the zinc-containing alcohol dehydrogenase family. Quinone oxidoreductase subfamily. Homotetramer. In terms of tissue distribution, only very low amounts in the lens.

It localises to the cytoplasm. It carries out the reaction 2 a quinone + NADPH + H(+) = 2 a 1,4-benzosemiquinone + NADP(+). Does not have alcohol dehydrogenase activity. Binds NADP and acts through a one-electron transfer process. Orthoquinones, such as 1,2-naphthoquinone or 9,10-phenanthrenequinone, are the best substrates (in vitro). May act in the detoxification of xenobiotics. Interacts with (AU)-rich elements (ARE) in the 3'-UTR of target mRNA species. Enhances the stability of mRNA coding for BCL2. NADPH binding interferes with mRNA binding. In Homo sapiens (Human), this protein is Quinone oxidoreductase (CRYZ).